The chain runs to 950 residues: Serine/threonine-protein kinase 10-A (950 aa).

Positions 36–294 (WEIIGELGDG…AAQLLEHPFV (259 aa)) constitute a Protein kinase domain. Residues 42-50 (LGDGAFGKV) and K65 contribute to the ATP site. D157 acts as the Proton acceptor in catalysis. Residues 319-331 (EEQGEAEEEEDSD) show a composition bias toward acidic residues. Residues 319-478 (EEQGEAEEEE…DSGSNSASES (160 aa)) are disordered. Basic and acidic residues predominate over residues 347 to 356 (EIGKDIEREQ). Over residues 365–382 (SATSPQKTDSQADNYSQR) the composition is skewed to polar residues. A compositionally biased stretch (basic and acidic residues) spans 416–432 (EPKRNSTAESYRGEEHS). A compositionally biased stretch (low complexity) spans 433 to 445 (SASSQRQRSAQSA). Residues 452–463 (SFDSPTRYFTNW) are compositionally biased toward polar residues. 3 positions are modified to phosphoserine; by PLK1: S482, S486, and S490. Positions 634-786 (IKFLEQLKLR…QLRLRQQQEK (153 aa)) form a coiled coil.

The protein belongs to the protein kinase superfamily. STE Ser/Thr protein kinase family. STE20 subfamily. Homodimer. Autophosphorylates. Phosphorylated by plk1/plx1, suggesting the existence of a feedback loop with plk1/plx1. activation of the protein.

It is found in the cell membrane. It carries out the reaction L-seryl-[protein] + ATP = O-phospho-L-seryl-[protein] + ADP + H(+). It catalyses the reaction L-threonyl-[protein] + ATP = O-phospho-L-threonyl-[protein] + ADP + H(+). May act as a polo kinase kinase by mediating phosphorylation of plk1/plx1 and subsequent activation of plk1/plx1 during oocyte maturation. The chain is Serine/threonine-protein kinase 10-A (stk10-a) from Xenopus laevis (African clawed frog).